We begin with the raw amino-acid sequence, 158 residues long: Antitoxin TacA (158 aa).

The protein belongs to the TacA antitoxin family. As to quaternary structure, forms a complex with cognate toxin TacT.

Its function is as follows. Antitoxin component of a type II toxin-antitoxin (TA) system. Counteracts the toxic effect of cognate toxin TacT. TacA-TacT both represses and derepresses expression of its own operon. The chain is Antitoxin TacA from Mycobacterium tuberculosis (strain ATCC 25618 / H37Rv).